A 315-amino-acid polypeptide reads, in one-letter code: Gamma-hemolysin component C (315 aa).

Positions 1-29 (MLKNKILATTLSVSLLAPLANPLLENAKA) are cleaved as a signal peptide.

It belongs to the aerolysin family. As to quaternary structure, toxicity requires sequential binding and synergistic association of a class S and a class F component which form heterooligomeric complexes. HlgC (class S) associates with HlgB (class F) thus forming an CB toxin.

Toxin that seems to act by forming pores in the membrane of the cell. Has a hemolytic and a leucotoxic activity. The sequence is that of Gamma-hemolysin component C (hlgC) from Staphylococcus aureus (strain MSSA476).